Consider the following 145-residue polypeptide: Bacilliredoxin MW1318 (145 aa).

This sequence belongs to the bacilliredoxin family.

This chain is Bacilliredoxin MW1318, found in Staphylococcus aureus (strain MW2).